The sequence spans 326 residues: Phospho-N-acetylmuramoyl-pentapeptide-transferase (326 aa).

9 helical membrane-spanning segments follow: residues 3-23 (ISISAGIVTFLLTLVGIPAFI), 51-71 (TMGGLVFLITSVLVAFFFALF), 79-99 (VGMILFILVLYGLVGFLDDFL), 115-135 (LALQLLGGVIFYLFYERGGDI), 138-158 (VFGYPVHLGFFYIFFALFWLV), 169-189 (GVDGLASISVVISLFAYGVIA), 195-215 (MDILLVILAMIGGLLGFFIFN), 221-243 (VFMGDVGSLALGGMLAAISMALH), and 306-326 (FFFWGVGLLASLLTLAILYLM).

The protein belongs to the glycosyltransferase 4 family. MraY subfamily. Mg(2+) is required as a cofactor.

It localises to the cell membrane. The enzyme catalyses UDP-N-acetyl-alpha-D-muramoyl-L-alanyl-gamma-D-glutamyl-L-lysyl-D-alanyl-D-alanine + di-trans,octa-cis-undecaprenyl phosphate = Mur2Ac(oyl-L-Ala-gamma-D-Glu-L-Lys-D-Ala-D-Ala)-di-trans,octa-cis-undecaprenyl diphosphate + UMP. The protein operates within cell wall biogenesis; peptidoglycan biosynthesis. Its function is as follows. Catalyzes the initial step of the lipid cycle reactions in the biosynthesis of the cell wall peptidoglycan: transfers peptidoglycan precursor phospho-MurNAc-pentapeptide from UDP-MurNAc-pentapeptide onto the lipid carrier undecaprenyl phosphate, yielding undecaprenyl-pyrophosphoryl-MurNAc-pentapeptide, known as lipid I. In Streptococcus pneumoniae serotype 2 (strain D39 / NCTC 7466), this protein is Phospho-N-acetylmuramoyl-pentapeptide-transferase.